The following is a 297-amino-acid chain: Transmembrane protein 169 (297 aa).

Residues 1-85 (MEEPTAVEGQ…KEEEGDDFLD (85 aa)) are disordered. At 1-159 (MEEPTAVEGQ…CQMGADRGPH (159 aa)) the chain is on the extracellular side. A compositionally biased stretch (acidic residues) spans 61–85 (KTDEEPGESEGGDQPKEEEGDDFLD). A helical membrane pass occupies residues 160-180 (VVLWTLICLPVVFILSFVVSF). Over 181 to 210 (YYGTITWYNIFLVYNEERTFWHKISYCPCL) the chain is Cytoplasmic. The chain crosses the membrane as a helical span at residues 211–231 (VLFYPVLIMAMASSLGLYAAV). The Extracellular segment spans residues 232 to 297 (VQLSWSWEAW…PIQEVETSTV (66 aa)).

The protein localises to the membrane. The polypeptide is Transmembrane protein 169 (TMEM169) (Homo sapiens (Human)).